The following is an 837-amino-acid chain: Dapper homolog 2 (837 aa).

Positions 65–113 (ENVSKEELRLEATLSLLKQQLTRLRRQDVGLKTHLQQLDQQITELKLDV) form a coiled coil. 5 disordered regions span residues 189–265 (ADES…PKYQ), 424–497 (HGKH…DKSS), 512–564 (GSQR…KQSG), 600–649 (QQIP…HTQR), and 738–782 (EMSD…EDEG). 2 stretches are compositionally biased toward polar residues: residues 246 to 265 (VKSS…PKYQ) and 432 to 445 (LDLQ…NNTA). 3 stretches are compositionally biased toward basic and acidic residues: residues 456–466 (ASEKRSGHFPK), 486–496 (EGSRASCHDKS), and 548–560 (LSRE…RTDL). Residues 741–759 (DYTTNRFGDSESSQGSQTA) show a composition bias toward polar residues. Over residues 768-782 (LDEEDLLEEEEEDEG) the composition is skewed to acidic residues. Residues 834–837 (MTLV) carry the PDZ-binding motif.

This sequence belongs to the dapper family. In terms of assembly, interacts with dvl2.

It localises to the cytoplasm. It is found in the late endosome. The protein resides in the nucleus. Its subcellular location is the cell membrane. Its function is as follows. Involved in regulation of intracellular signaling pathways during development. Specifically thought to play a role in canonical and/or non-canonical Wnt signaling pathways through interaction with DSH (Dishevelled) family proteins. Positive regulator of the Wnt signaling pathway which acts downstream of wnt1 indicative for non-canonical Wnt signaling. Also negatively regulates the Nodal signaling pathway, possibly by promoting the lysosomal degradation of Nodal receptors. Required for convergent extension movements in gastrulation. This chain is Dapper homolog 2 (dact2), found in Danio rerio (Zebrafish).